The chain runs to 347 residues: GMP reductase (347 aa).

T108–A131 contributes to the NADP(+) binding site. 2 residues coordinate K(+): G181 and G183. Residue C186 is the Thioimidate intermediate of the active site. I216–V239 contacts NADP(+).

This sequence belongs to the IMPDH/GMPR family. GuaC type 1 subfamily. In terms of assembly, homotetramer.

The enzyme catalyses IMP + NH4(+) + NADP(+) = GMP + NADPH + 2 H(+). Catalyzes the irreversible NADPH-dependent deamination of GMP to IMP. It functions in the conversion of nucleobase, nucleoside and nucleotide derivatives of G to A nucleotides, and in maintaining the intracellular balance of A and G nucleotides. The sequence is that of GMP reductase from Enterobacter sp. (strain 638).